Consider the following 521-residue polypeptide: Maturase K (521 aa).

Belongs to the intron maturase 2 family. MatK subfamily.

It is found in the plastid. The protein resides in the chloroplast. Its function is as follows. Usually encoded in the trnK tRNA gene intron. Probably assists in splicing its own and other chloroplast group II introns. This Kniphofia uvaria (Red-hot poker) protein is Maturase K.